A 537-amino-acid chain; its full sequence is Apoptosis inhibitor 5-like protein API5 (537 aa).

The tract at residues 9-363 (AEVERLYELG…TTNSLCGYKI (355 aa)) is ARM-like and Heat-like helical repeats. A disordered region spans residues 465–537 (WMEQPKKPAP…GGRGRGWGYR (73 aa)). Residues 474–492 (PTTTGGKRSQPATNGNTPA) are compositionally biased toward polar residues.

This sequence belongs to the API5 family. As to quaternary structure, interacts with AIP1 and AIP2.

Its subcellular location is the nucleus. Putative anti-apoptotic factor involved in the regulation of tapetal programmed cell death (PCD) and degeneration during anther development. Interacts directly with the DEAD-box ATP-dependent RNA helicases AIP1 and AIP2 that form dimers and bind the promoter region of the cysteine protease CP1 involved in tapetum PCD. This Oryza sativa subsp. japonica (Rice) protein is Apoptosis inhibitor 5-like protein API5.